The sequence spans 296 residues: Non-homologous end joining protein Ku (296 aa).

The region spanning 11–187 (TFGLVNIPVK…ELPEAGEPSS (177 aa)) is the Ku domain. The interval 254 to 296 (AAARRRGDEHEAPARGERRHAAAAAARTTGRPRAARASRKKRG) is disordered. Positions 258–273 (RRGDEHEAPARGERRH) are enriched in basic and acidic residues. A compositionally biased stretch (low complexity) spans 275–285 (AAAAARTTGRP). The segment covering 286–296 (RAARASRKKRG) has biased composition (basic residues).

Belongs to the prokaryotic Ku family. Homodimer. Interacts with LigD.

Functionally, with LigD forms a non-homologous end joining (NHEJ) DNA repair enzyme, which repairs dsDNA breaks with reduced fidelity. Binds linear dsDNA with 5'- and 3'- overhangs but not closed circular dsDNA nor ssDNA. Recruits and stimulates the ligase activity of LigD. The protein is Non-homologous end joining protein Ku of Anaeromyxobacter sp. (strain K).